A 386-amino-acid polypeptide reads, in one-letter code: 3-ketosteroid-9-alpha-monooxygenase, oxygenase component (386 aa).

Residues 26–128 (WHCLGVAKDY…TDVRSGLLFV (103 aa)) form the Rieske domain. Residues C67, H69, C86, and H89 each coordinate [2Fe-2S] cluster. Fe cation contacts are provided by N175, H181, H186, and D304.

Homotrimer. The two-component system 3-ketosteroid-9-alpha-monooxygenase is composed of an oxygenase component KshA and a reductase component KshB. The cofactor is [2Fe-2S] cluster. Fe cation serves as cofactor.

It catalyses the reaction androsta-1,4-diene-3,17-dione + 2 reduced [2Fe-2S]-[ferredoxin] + O2 + 2 H(+) = 9alpha-hydroxyandrosta-1,4-diene-3,17-dione + 2 oxidized [2Fe-2S]-[ferredoxin] + H2O. The catalysed reaction is androst-4-ene-3,17-dione + NADH + O2 + H(+) = 9alpha-hydroxy-androst-4-ene-3,17-dione + NAD(+) + H2O. It carries out the reaction 3-oxochol-4-en-22-oate + NADH + O2 + H(+) = 9alpha-hydroxy-3-oxochol-4-en-22-oate + NAD(+) + H2O. The enzyme catalyses 3-oxochola-1,4-dien-22-oate + NADH + O2 + H(+) = 9alpha-hydroxy-3-oxochola-1,4-dien-22-oate + NAD(+) + H2O. It catalyses the reaction 3-oxochol-4-en-22-oyl-CoA + NADH + O2 + H(+) = 9alpha-hydroxy-3-oxochol-4-en-22-oyl-CoA + NAD(+) + H2O. The catalysed reaction is 3-oxochola-1,4-dien-22-oyl-CoA + NADH + O2 + H(+) = 9alpha-hydroxy-3-oxochola-1,4-dien-22-oyl-CoA + NAD(+) + H2O. It participates in lipid metabolism; steroid biosynthesis. Its function is as follows. Involved in the degradation of cholesterol. Catalyzes the introduction of a 9a-hydroxyl moiety into 1,4-androstadiene-3,17-dione (ADD) to yield the 9alpha-hydroxy-1,4-androstadiene-3,17-dione (9OHADD) intermediate which spontaneously form 3-hydroxy-9,10-seconandrost-1,3,5(10)-triene-9,17-dione (HSA) via the meta-cleavage of ring B with concomitant aromatization of ring A. KSH is also able to use 4-androstene-3,17-dione (AD), 3-oxo-23,24-bisnorcholesta-4-en-22-oate (4-BNC), 3-oxo-23,24-bisnorcholesta-1,4-dien-22-oate (1,4-BNC), 3-oxo-23,24-bisnorcholesta-4-en-22-oyl-coenzyme A thioester (4-BNC-CoA) and 3-oxo-23,24-bisnorcholesta-1,4-dien-22-oyl-coenzyme A thioester (1,4-BNC-CoA) as substrates. This Mycobacterium tuberculosis (strain ATCC 25618 / H37Rv) protein is 3-ketosteroid-9-alpha-monooxygenase, oxygenase component (kshA).